The primary structure comprises 346 residues: Syntaxin UFE1 (346 aa).

The Cytoplasmic segment spans residues 1-324 (MMSDLTPIFR…RKAKRAAGRT (324 aa)). One can recognise a t-SNARE coiled-coil homology domain in the interval 255-317 (LNQKNEQLKK…KKGNKELRKA (63 aa)). The chain crosses the membrane as a helical; Anchor for type IV membrane protein span at residues 325–342 (AKMTTYGAIIMGVFILFL). At 343–346 (DYVG) the chain is on the lumenal side.

Belongs to the syntaxin family. Component of a SNARE complex consisting of UFE1, USE1, SEC20 and SEC22 or YKT6.

The protein resides in the endoplasmic reticulum membrane. Its function is as follows. Syntaxin required for targeting and fusion of Golgi-derived retrograde transport vesicles with the ER. In Saccharomyces cerevisiae (strain ATCC 204508 / S288c) (Baker's yeast), this protein is Syntaxin UFE1 (UFE1).